The chain runs to 274 residues: MPELPEVETVRRTLAELVIGKTIEQVDVGWAKMIKRPDDVDQFKWLLKGQTIRSMGRRGKFLLFHLDDYTLVSHLRMEGRYGLYQQNESVAKHTHVRFVFGDGTELRYQDVRKFGTMHLFQSGREQMEPPLAKLGVEPFSDQFSAKLLTERLSKTSRKIKSALLDQGIIVGLGNIYVDEALFRARIHPERLAKDVTVAEVKILHQAILNTLTEAVNLGGSSIKSYVNGQGEMGMFQQRLDVYGRKGETCRQCGTPITKTVVGGRGTHFCSVCQK.

P2 functions as the Schiff-base intermediate with DNA in the catalytic mechanism. E3 serves as the catalytic Proton donor. K60 serves as the catalytic Proton donor; for beta-elimination activity. Positions 93 and 112 each coordinate DNA. Residues 240–274 form an FPG-type zinc finger; the sequence is DVYGRKGETCRQCGTPITKTVVGGRGTHFCSVCQK. Catalysis depends on R264, which acts as the Proton donor; for delta-elimination activity.

Belongs to the FPG family. Monomer. Requires Zn(2+) as cofactor.

The catalysed reaction is Hydrolysis of DNA containing ring-opened 7-methylguanine residues, releasing 2,6-diamino-4-hydroxy-5-(N-methyl)formamidopyrimidine.. It catalyses the reaction 2'-deoxyribonucleotide-(2'-deoxyribose 5'-phosphate)-2'-deoxyribonucleotide-DNA = a 3'-end 2'-deoxyribonucleotide-(2,3-dehydro-2,3-deoxyribose 5'-phosphate)-DNA + a 5'-end 5'-phospho-2'-deoxyribonucleoside-DNA + H(+). Functionally, involved in base excision repair of DNA damaged by oxidation or by mutagenic agents. Acts as a DNA glycosylase that recognizes and removes damaged bases. Has a preference for oxidized purines, such as 7,8-dihydro-8-oxoguanine (8-oxoG). Has AP (apurinic/apyrimidinic) lyase activity and introduces nicks in the DNA strand. Cleaves the DNA backbone by beta-delta elimination to generate a single-strand break at the site of the removed base with both 3'- and 5'-phosphates. The chain is Formamidopyrimidine-DNA glycosylase (mutM) from Halalkalibacterium halodurans (strain ATCC BAA-125 / DSM 18197 / FERM 7344 / JCM 9153 / C-125) (Bacillus halodurans).